The chain runs to 145 residues: Large ribosomal subunit protein uL11 (145 aa).

The protein belongs to the universal ribosomal protein uL11 family. Part of the ribosomal stalk of the 50S ribosomal subunit. Interacts with L10 and the large rRNA to form the base of the stalk. L10 forms an elongated spine to which L12 dimers bind in a sequential fashion forming a multimeric L10(L12)X complex. In terms of processing, one or more lysine residues are methylated.

Its function is as follows. Forms part of the ribosomal stalk which helps the ribosome interact with GTP-bound translation factors. The sequence is that of Large ribosomal subunit protein uL11 from Persephonella marina (strain DSM 14350 / EX-H1).